The primary structure comprises 146 residues: Hemoglobin subunit beta (146 aa).

Residues 2-146 form the Globin domain; that stretch reads QWSAEEKQLI…VAHALARKYH (145 aa). Histidine 63 and histidine 92 together coordinate heme b.

The protein belongs to the globin family. In terms of assembly, heterotetramer of two alpha chains and two beta chains. In terms of tissue distribution, red blood cells.

Its function is as follows. Involved in oxygen transport from the lung to the various peripheral tissues. This is Hemoglobin subunit beta (HBB) from Struthio camelus (Common ostrich).